A 164-amino-acid chain; its full sequence is Phosphopantetheine adenylyltransferase (164 aa).

Thr14 serves as a coordination point for substrate. Residues 14–15 and His22 each bind ATP; that span reads TF. 3 residues coordinate substrate: Lys46, Met78, and Arg92. Residues 93–95, Glu103, and 128–134 each bind ATP; these read GLR and HAFISST.

This sequence belongs to the bacterial CoaD family. As to quaternary structure, homohexamer. Requires Mg(2+) as cofactor.

Its subcellular location is the cytoplasm. It catalyses the reaction (R)-4'-phosphopantetheine + ATP + H(+) = 3'-dephospho-CoA + diphosphate. It functions in the pathway cofactor biosynthesis; coenzyme A biosynthesis; CoA from (R)-pantothenate: step 4/5. Reversibly transfers an adenylyl group from ATP to 4'-phosphopantetheine, yielding dephospho-CoA (dPCoA) and pyrophosphate. This chain is Phosphopantetheine adenylyltransferase, found in Vibrio vulnificus (strain CMCP6).